The chain runs to 146 residues: MKVVLQRAKQAQVTVEGETVGAIDHGLVLLIGITHGDTEEDARYLAEKIAHLRIFEDEGGKMNQSVKDVGGAILSISQFTLYGDCRKGRRPNFMEAAKPEHAEPLYETLNSHLEQLGLHVETGRFGAMMDVQLINDGPVTLLVESK.

The short motif at 137–138 (GP) is the Gly-cisPro motif, important for rejection of L-amino acids element.

Belongs to the DTD family. In terms of assembly, homodimer.

It localises to the cytoplasm. The enzyme catalyses glycyl-tRNA(Ala) + H2O = tRNA(Ala) + glycine + H(+). It carries out the reaction a D-aminoacyl-tRNA + H2O = a tRNA + a D-alpha-amino acid + H(+). Its function is as follows. An aminoacyl-tRNA editing enzyme that deacylates mischarged D-aminoacyl-tRNAs. Also deacylates mischarged glycyl-tRNA(Ala), protecting cells against glycine mischarging by AlaRS. Acts via tRNA-based rather than protein-based catalysis; rejects L-amino acids rather than detecting D-amino acids in the active site. By recycling D-aminoacyl-tRNA to D-amino acids and free tRNA molecules, this enzyme counteracts the toxicity associated with the formation of D-aminoacyl-tRNA entities in vivo and helps enforce protein L-homochirality. The polypeptide is D-aminoacyl-tRNA deacylase (Halalkalibacterium halodurans (strain ATCC BAA-125 / DSM 18197 / FERM 7344 / JCM 9153 / C-125) (Bacillus halodurans)).